Here is a 78-residue protein sequence, read N- to C-terminus: Protein Class8-like (78 aa).

Positions 1–19 are cleaved as a signal peptide; that stretch reads MRTLVVLLIGAVLLCSANA. A propeptide spanning residues 20–36 is cleaved from the precursor; sequence FLDELLAESVNDMTDKR. In terms of domain architecture, ShKT spans 38 to 78; the sequence is CFDKYKSNICGGVISPAHCVRRSGRMAKFAKENCAHFCGFC. Intrachain disulfides connect C38-C78, C47-C71, and C56-C75.

In terms of tissue distribution, expressed in ganglion neurons residing in the mesoglea (observed in both planulae and primary polyps). Not expressed in nematocytes.

Its function is as follows. Probable neuropeptide. The protein is Protein Class8-like of Nematostella vectensis (Starlet sea anemone).